The sequence spans 716 residues: MSVDKAELCGSLLTWLQTFQVSPPCASPQDLSSGLAIAHVLNQIDPSWFNNEWLQGISEDSSPSWRLKVRKLEKILQSLVEYSKNVLGHPVSDQHLPDVSLIGEFSNPAELGKLLQLVLGCAISCEKKQEYIQRIMTLEESVQHVVMEAIQELMTKDTPDSLSPENYGNFDTQSRRYYFLSEEVEEGDHLQQHYLDLERQLLLLSEEKQNLAQENAALRERVGRSEVESAPGLTAKKLLLLQSQLEQLQEENFRLESSREDDRLRCLELEREVAELQQRNQALTSLSQEAQALKDEMDELRQSSERARQLEATLNSCRRRLGELQELRRQVRQLEERNAGHAERTRQLEEELRRAGSLRAQLEAQRRQVQELQGQWQEEAMKAEKWLFECRNLEEKCDLVTKEKERLLTERDSLREANEELRCAQLQPRGLAQADLSLDPTPSGLENLAAEILPAELRETLVRLQLENKRLCQQEAADRERQEELQRHLEEANRARHGLEAQQRLNQQQLSELRAQVEELQKALQEQGGKTEDPTLLKRKLEDHLQKLHEADLELQRKREYIEELEPPTDSSTARRIEELQDSLQKKDADLRAMEERYRRYVDKARTVIQTLEPKQRPPTVVSPEFHTLRSQLWERNLRIRQMEMDYEKSRRRQEQEEKLLISAWYSMGMALEHRAGEEHAPAHAQSFLAQQRLATNARRGPLGRQALSLRPTDKH.

Residues 1–161 are required for localization to the centrosome and induction of aggresome formation; sequence MSVDKAELCG…ELMTKDTPDS (161 aa). The sufficient for interaction with microtubules stretch occupies residues 1 to 546; sequence MSVDKAELCG…LKRKLEDHLQ (546 aa). Positions 6–122 constitute a Calponin-homology (CH) domain; the sequence is AELCGSLLTW…KLLQLVLGCA (117 aa). Phosphoserine is present on Ser163. 2 coiled-coil regions span residues 188–427 and 455–605; these read DHLQ…AQLQ and AELR…VDKA. The interval 533–716 is required for localization to the centrosome and induction of aggresome formation; the sequence is DPTLLKRKLE…ALSLRPTDKH (184 aa). Residues 582–716 are sufficient for interaction with CNTRL; it reads DSLQKKDADL…ALSLRPTDKH (135 aa).

This sequence belongs to the hook family. In terms of assembly, self-associates. Component of the FTS/Hook/FHIP complex (FHF complex), composed of AKTIP/FTS, FHIP1B, and one or more members of the Hook family of proteins HOOK1, HOOK2, and HOOK3. May interact directly with AKTIP/FTS, HOOK1 and HOOK3. Associates with several subunits of the homotypic vesicular sorting complex (the HOPS complex) including VPS16 and VPS41; these interactions may be indirect. Interacts with CNTRL. Interacts with microtubules. Interacts with ZC3H14. Interacts with LRGUK (via guanylate kinase-like domain). Interacts with CCDC181. Interacts with AP4M1; the interaction is direct, mediates the interaction between FTS-Hook-FHIP (FHF) complex and AP-4 and the perinuclear distribution of AP-4. Expressed in brain, cerebellum, kidney, liver and heart, with highest levels in heart and kidney (at protein level).

It localises to the cytoplasm. The protein localises to the cytoskeleton. Its subcellular location is the microtubule organizing center. It is found in the centrosome. The protein resides in the golgi apparatus. It localises to the trans-Golgi network. Functionally, component of the FTS/Hook/FHIP complex (FHF complex). The FHF complex may function to promote vesicle trafficking and/or fusion via the homotypic vesicular protein sorting complex (the HOPS complex). Contributes to the establishment and maintenance of centrosome function. May function in the positioning or formation of aggresomes, which are pericentriolar accumulations of misfolded proteins, proteasomes and chaperones. FHF complex promotes the distribution of AP-4 complex to the perinuclear area of the cell. This Mus musculus (Mouse) protein is Protein Hook homolog 2 (Hook2).